Here is a 993-residue protein sequence, read N- to C-terminus: Mediator of RNA polymerase II transcription subunit 24 (993 aa).

Serine 827 and serine 829 each carry phosphoserine.

Belongs to the Mediator complex subunit 24 family. Component of the Mediator complex, which includes at least CDK8, MED4, MED6, MED11, MED14, MED17, MED18, MED20, MED21, MED22, MED27, MED28, MED30 and MED31.

It localises to the nucleus. Functionally, component of the Mediator complex, a coactivator involved in the regulated transcription of nearly all RNA polymerase II-dependent genes. Mediator functions as a bridge to convey information from gene-specific regulatory proteins to the basal RNA polymerase II transcription machinery. Mediator is recruited to promoters by direct interactions with regulatory proteins and serves as a scaffold for the assembly of a functional preinitiation complex with RNA polymerase II and the general transcription factors. Required for activated transcription of the MtnA, MtnB and MtnD genes. The chain is Mediator of RNA polymerase II transcription subunit 24 (MED24) from Drosophila melanogaster (Fruit fly).